We begin with the raw amino-acid sequence, 213 residues long: UPF0329 protein ECU04_0110 (213 aa).

This sequence belongs to the UPF0329 family.

This Encephalitozoon cuniculi (strain GB-M1) (Microsporidian parasite) protein is UPF0329 protein ECU04_0110.